Reading from the N-terminus, the 446-residue chain is Tol-Pal system protein TolB (446 aa).

The N-terminal stretch at 1-43 is a signal peptide; sequence MRKLWAPNWLSRRQNANPTRDQSRHALMAWLAAALMSAGAAHA.

It belongs to the TolB family. In terms of assembly, the Tol-Pal system is composed of five core proteins: the inner membrane proteins TolA, TolQ and TolR, the periplasmic protein TolB and the outer membrane protein Pal. They form a network linking the inner and outer membranes and the peptidoglycan layer.

It is found in the periplasm. In terms of biological role, part of the Tol-Pal system, which plays a role in outer membrane invagination during cell division and is important for maintaining outer membrane integrity. In Cupriavidus metallidurans (strain ATCC 43123 / DSM 2839 / NBRC 102507 / CH34) (Ralstonia metallidurans), this protein is Tol-Pal system protein TolB.